Reading from the N-terminus, the 272-residue chain is Potassium channel regulatory protein (272 aa).

The BTB domain occupies 5 to 106 (ELVTLNVGGK…LLNPYLLQPR (102 aa)).

As to quaternary structure, can form homooligomers. Interacts with KCNA1 (via cytoplasmic N-terminal domain) and KCNA4. As to expression, ubiquitous in normal tissues and expressed in some tumor tissues.

It localises to the endoplasmic reticulum. Its function is as follows. Inhibits potassium fluxes in cells. May regulate Kv1 family channel proteins by retaining a fraction of channels in endomembranes. This is Potassium channel regulatory protein (KCNRG) from Homo sapiens (Human).